A 138-amino-acid chain; its full sequence is Venom allergen 2 (138 aa).

A signal peptide spans 1 to 19; the sequence is MKSFVLATCLLGFAQIIYA.

It belongs to the ant venom allergen 2/4 family. As to quaternary structure, homodimer; disulfide-linked. In terms of tissue distribution, expressed by the venom gland.

It localises to the secreted. The polypeptide is Venom allergen 2 (Solenopsis saevissima (Fire ant)).